Consider the following 357-residue polypeptide: Leucoanthocyanidin dioxygenase (357 aa).

The 100-residue stretch at 212-311 (LLLQMKINYY…RISWAVFCEP (100 aa)) folds into the Fe2OG dioxygenase domain. 3 residues coordinate Fe cation: histidine 236, aspartate 238, and histidine 292.

This sequence belongs to the iron/ascorbate-dependent oxidoreductase family. It depends on Fe cation as a cofactor. The cofactor is L-ascorbate.

The catalysed reaction is a (2R,3S,4S)-leucoanthocyanidin + 2-oxoglutarate + O2 = a 4-H-anthocyanidin with a 3-hydroxy group + succinate + CO2 + 2 H2O. It participates in pigment biosynthesis; anthocyanin biosynthesis. In terms of biological role, oxidation of leucoanthocyanidins into anthocyanidins. The polypeptide is Leucoanthocyanidin dioxygenase (ANS) (Malus domestica (Apple)).